A 98-amino-acid polypeptide reads, in one-letter code: Secreted LysM effector Mgx1LysM (98 aa).

Residues 1–18 (MKVTTIIAALLSVAVVDA) form the signal peptide. Cystine bridges form between Cys31/Cys89 and Cys62/Cys97. One can recognise a LysM domain in the interval 37–85 (IPYVVKKGDTLTHIAHDIYKRKVGICDLAYTNHIGKNPNLIYAGQTLLI). Residues Gly44, Thr48, Asn75, and Ile77 each contribute to the chitin site.

The protein belongs to the secreted LysM effector family. As to quaternary structure, forms homodimers in a chitin-independent manner through interactions at the N-termini of Mgx1LysM monomers. Homodimers are further polymerized in a chitin-dependent manner.

It localises to the secreted. It is found in the cell wall. Its function is as follows. Secreted effector that enables the plant pathogenic fungus to manipulate host defenses for successful infection. Binds chitin and suppresses the chitin-induced reactive oxygen species (ROS) burst. Chitin-induced polymerization of homodimers forms a contiguous Mg1LysM highly oligomeric super-complexe that is anchored to the chitin in the fungal cell wall to prevent hydrolysis by host chitinases. This Zymoseptoria tritici (strain ST99CH_3D7) protein is Secreted LysM effector Mgx1LysM.